The chain runs to 203 residues: IMP cyclohydrolase (203 aa).

It belongs to the archaeal IMP cyclohydrolase family.

It catalyses the reaction IMP + H2O = 5-formamido-1-(5-phospho-D-ribosyl)imidazole-4-carboxamide. It participates in purine metabolism; IMP biosynthesis via de novo pathway; IMP from 5-formamido-1-(5-phospho-D-ribosyl)imidazole-4-carboxamide: step 1/1. In terms of biological role, catalyzes the cyclization of 5-formylamidoimidazole-4-carboxamide ribonucleotide to IMP. This is IMP cyclohydrolase from Methanococcus aeolicus (strain ATCC BAA-1280 / DSM 17508 / OCM 812 / Nankai-3).